The primary structure comprises 730 residues: Tubulin polyglutamylase ttll-5 (730 aa).

The TTL domain maps to 120 to 478 (RLRLTFKMMR…PLLDRKIIDS (359 aa)). ATP-binding positions include 278-281 (SRYL), Lys-291, and Asp-293. The tract at residues 594–618 (KKNTKNSSGSSKASSSSASASSSSS) is disordered. The span at 600–618 (SSGSSKASSSSASASSSSS) shows a compositional bias: low complexity.

It belongs to the tubulin--tyrosine ligase family. Expressed in body wall muscles. Not expressed in sensory neurons.

It catalyses the reaction L-glutamyl-[protein] + L-glutamate + ATP = gamma-L-glutamyl-L-glutamyl-[protein] + ADP + phosphate + H(+). Polyglutamylase which preferentially modifies alpha-tubulin. Involved in the side-chain initiation step of the polyglutamylation reaction rather than in the elongation step. Together with ttll-4 and ttll-11, required for male mating. Probably by regulating microtubule stability via the glutamylation of tubulin, negatively regulates axon regrowth after injury in PLM neurons. The polypeptide is Tubulin polyglutamylase ttll-5 (Caenorhabditis elegans).